Reading from the N-terminus, the 684-residue chain is DNA helicase IV (684 aa).

Residues 195–505 form the UvrD-like helicase ATP-binding domain; sequence SPLNPAQARA…CDLDTTYRFN (311 aa). ATP-binding positions include 216 to 223 and Arg503; that span reads AGAGSGKT.

The protein belongs to the helicase family. UvrD subfamily.

The enzyme catalyses Couples ATP hydrolysis with the unwinding of duplex DNA by translocating in the 3'-5' direction.. The catalysed reaction is ATP + H2O = ADP + phosphate + H(+). Helicase IV catalyzes the unwinding of duplex DNA in the 3' to 5' direction with respect to the bound single strand in a reaction that is dependent upon the hydrolysis of ATP. In Escherichia coli (strain K12), this protein is DNA helicase IV (helD).